Consider the following 270-residue polypeptide: HTH-type transcriptional activator AllS (270 aa).

Residues 4 to 61 enclose the HTH lysR-type domain; the sequence is LDPETLRTFVSVAETGSFSRAAEKLYKTTATISYRIKLLEDNTGVALFSRTTRSVLLT. The segment at residues 21 to 40 is a DNA-binding region (H-T-H motif); the sequence is FSRAAEKLYKTTATISYRIK.

This sequence belongs to the LysR transcriptional regulatory family.

In terms of biological role, positive regulator essential for the expression of allD operon. Binds to the allD promoter. The polypeptide is HTH-type transcriptional activator AllS (allS) (Klebsiella pneumoniae).